A 150-amino-acid polypeptide reads, in one-letter code: Large ribosomal subunit protein uL11 (150 aa).

This sequence belongs to the universal ribosomal protein uL11 family. Part of the ribosomal stalk of the 50S ribosomal subunit. Interacts with L10 and the large rRNA to form the base of the stalk. L10 forms an elongated spine to which L12 dimers bind in a sequential fashion forming a multimeric L10(L12)X complex. One or more lysine residues are methylated.

In terms of biological role, forms part of the ribosomal stalk which helps the ribosome interact with GTP-bound translation factors. In Ureaplasma parvum serovar 3 (strain ATCC 27815 / 27 / NCTC 11736), this protein is Large ribosomal subunit protein uL11.